The sequence spans 118 residues: Small ribosomal subunit protein uS13 (118 aa).

The disordered stretch occupies residues 94–118 (GLPVRGQRTKTNARTRKGPRKPIKK).

The protein belongs to the universal ribosomal protein uS13 family. In terms of assembly, part of the 30S ribosomal subunit. Forms a loose heterodimer with protein S19. Forms two bridges to the 50S subunit in the 70S ribosome.

Its function is as follows. Located at the top of the head of the 30S subunit, it contacts several helices of the 16S rRNA. In the 70S ribosome it contacts the 23S rRNA (bridge B1a) and protein L5 of the 50S subunit (bridge B1b), connecting the 2 subunits; these bridges are implicated in subunit movement. Contacts the tRNAs in the A and P-sites. The polypeptide is Small ribosomal subunit protein uS13 (Erwinia tasmaniensis (strain DSM 17950 / CFBP 7177 / CIP 109463 / NCPPB 4357 / Et1/99)).